The chain runs to 371 residues: MASVQLQNVTKAWGEVVVSKDINLDIHEGEFVVFVGPSGCGKSTLLRMIAGLETITSGDLFIGEKRMNDTPPAERGVGMVFQSYALYPHLSVAENMSFGLKLAGAKKEVINQRVNQVAEVLQLAHLLDRKPKALSGGQRQRVAIGRTLVAEPSVFLLDEPLSNLDAALRVQMRIEISRLHKRLGRTMIYVTHDQVEAMTLADKIVVLDAGRVAQVGKPLELYHYPADRFVAGFIGSPKMNFLPVKVTSTAIDQVQVELPMPNRQQVWLPVESRDVQVGANMSLGIRPEHLLPSDIADVILEGEVQVVEQLGNETQIHIQIPSIRQNLVYRQNDVVLVEEGATFAIGLPPERCHLFREDGTACRRLHKEPGV.

The ABC transporter domain maps to 4–234 (VQLQNVTKAW…PADRFVAGFI (231 aa)). 36–43 (GPSGCGKS) provides a ligand contact to ATP.

This sequence belongs to the ABC transporter superfamily. Maltooligosaccharide importer (TC 3.A.1.1.1) family. As to quaternary structure, the complex is composed of two ATP-binding proteins (MalK), two transmembrane proteins (MalG and MalK) and a solute-binding protein (MalE).

It is found in the cell inner membrane. The enzyme catalyses D-maltose(out) + ATP + H2O = D-maltose(in) + ADP + phosphate + H(+). Part of the ABC transporter complex MalEFGK involved in maltose/maltodextrin import. Responsible for energy coupling to the transport system. This chain is Maltose/maltodextrin import ATP-binding protein MalK, found in Escherichia coli O6:H1 (strain CFT073 / ATCC 700928 / UPEC).